We begin with the raw amino-acid sequence, 464 residues long: tRNA modification GTPase MnmE (464 aa).

Residues Arg28, Glu90, and Arg129 each coordinate (6S)-5-formyl-5,6,7,8-tetrahydrofolate. One can recognise a TrmE-type G domain in the interval 226–385 (GLATAIVGRP…LEEKIAELFF (160 aa)). K(+) is bound at residue Asn236. GTP is bound by residues 236–241 (NVGKSS), 255–261 (TDIAGTT), and 280–283 (DTAG). Ser240 provides a ligand contact to Mg(2+). Residues Thr255, Ile257, and Thr260 each coordinate K(+). Thr261 lines the Mg(2+) pocket. Lys464 is a (6S)-5-formyl-5,6,7,8-tetrahydrofolate binding site.

The protein belongs to the TRAFAC class TrmE-Era-EngA-EngB-Septin-like GTPase superfamily. TrmE GTPase family. In terms of assembly, homodimer. Heterotetramer of two MnmE and two MnmG subunits. It depends on K(+) as a cofactor.

The protein resides in the cytoplasm. Exhibits a very high intrinsic GTPase hydrolysis rate. Involved in the addition of a carboxymethylaminomethyl (cmnm) group at the wobble position (U34) of certain tRNAs, forming tRNA-cmnm(5)s(2)U34. This chain is tRNA modification GTPase MnmE, found in Ligilactobacillus salivarius (strain UCC118) (Lactobacillus salivarius).